The following is a 279-amino-acid chain: Zinc finger CCCH domain-containing protein 1 (279 aa).

The segment at 20 to 45 (DVIVLSPGPPARRRPPPVKAVEPESG) is disordered. C3H1-type zinc fingers lie at residues 56–84 (FYKTRVCETFVTSGRCMFEDGCTFAHGDE) and 139–167 (RAITKVCFEFRDKGICYFGETCAFPHVSA).

The chain is Zinc finger CCCH domain-containing protein 1 from Oryza sativa subsp. japonica (Rice).